The sequence spans 269 residues: Formamidopyrimidine-DNA glycosylase (269 aa).

Proline 2 serves as the catalytic Schiff-base intermediate with DNA. The Proton donor role is filled by glutamate 3. The active-site Proton donor; for beta-elimination activity is the lysine 58. 3 residues coordinate DNA: histidine 91, arginine 110, and lysine 150. Residues 235 to 269 (SVYGCKNKKCYRCKGIIIKFVQNQRSTFYCKKCQT) form an FPG-type zinc finger. Arginine 259 serves as the catalytic Proton donor; for delta-elimination activity.

The protein belongs to the FPG family. As to quaternary structure, monomer. Zn(2+) is required as a cofactor.

It catalyses the reaction Hydrolysis of DNA containing ring-opened 7-methylguanine residues, releasing 2,6-diamino-4-hydroxy-5-(N-methyl)formamidopyrimidine.. The enzyme catalyses 2'-deoxyribonucleotide-(2'-deoxyribose 5'-phosphate)-2'-deoxyribonucleotide-DNA = a 3'-end 2'-deoxyribonucleotide-(2,3-dehydro-2,3-deoxyribose 5'-phosphate)-DNA + a 5'-end 5'-phospho-2'-deoxyribonucleoside-DNA + H(+). Involved in base excision repair of DNA damaged by oxidation or by mutagenic agents. Acts as a DNA glycosylase that recognizes and removes damaged bases. Has a preference for oxidized purines, such as 7,8-dihydro-8-oxoguanine (8-oxoG). Has AP (apurinic/apyrimidinic) lyase activity and introduces nicks in the DNA strand. Cleaves the DNA backbone by beta-delta elimination to generate a single-strand break at the site of the removed base with both 3'- and 5'-phosphates. The chain is Formamidopyrimidine-DNA glycosylase from Vesicomyosocius okutanii subsp. Calyptogena okutanii (strain HA).